Here is a 480-residue protein sequence, read N- to C-terminus: NADH-quinone oxidoreductase subunit N (480 aa).

14 helical membrane-spanning segments follow: residues Leu-12–Phe-32, Leu-41–Val-61, Phe-80–Leu-100, Leu-105–Val-125, Leu-130–Phe-150, Phe-165–Phe-185, Ile-204–Ala-224, Ala-237–Leu-257, Val-275–Gln-295, Leu-300–Ser-320, Ala-326–Leu-346, Gly-372–Phe-392, Leu-406–Val-428, and Ile-450–Phe-470.

It belongs to the complex I subunit 2 family. As to quaternary structure, NDH-1 is composed of 14 different subunits. Subunits NuoA, H, J, K, L, M, N constitute the membrane sector of the complex.

The protein resides in the cell inner membrane. It carries out the reaction a quinone + NADH + 5 H(+)(in) = a quinol + NAD(+) + 4 H(+)(out). Its function is as follows. NDH-1 shuttles electrons from NADH, via FMN and iron-sulfur (Fe-S) centers, to quinones in the respiratory chain. The immediate electron acceptor for the enzyme in this species is believed to be ubiquinone. Couples the redox reaction to proton translocation (for every two electrons transferred, four hydrogen ions are translocated across the cytoplasmic membrane), and thus conserves the redox energy in a proton gradient. The protein is NADH-quinone oxidoreductase subunit N of Maricaulis maris (strain MCS10) (Caulobacter maris).